The primary structure comprises 356 residues: Phosphate acyltransferase (356 aa).

This sequence belongs to the PlsX family. Homodimer. Probably interacts with PlsY.

It is found in the cytoplasm. It catalyses the reaction a fatty acyl-[ACP] + phosphate = an acyl phosphate + holo-[ACP]. It functions in the pathway lipid metabolism; phospholipid metabolism. In terms of biological role, catalyzes the reversible formation of acyl-phosphate (acyl-PO(4)) from acyl-[acyl-carrier-protein] (acyl-ACP). This enzyme utilizes acyl-ACP as fatty acyl donor, but not acyl-CoA. The polypeptide is Phosphate acyltransferase (Xanthobacter autotrophicus (strain ATCC BAA-1158 / Py2)).